We begin with the raw amino-acid sequence, 350 residues long: Heat-inducible transcription repressor HrcA (350 aa).

Belongs to the HrcA family.

Negative regulator of class I heat shock genes (grpE-dnaK-dnaJ and groELS operons). Prevents heat-shock induction of these operons. The polypeptide is Heat-inducible transcription repressor HrcA (Xanthomonas euvesicatoria pv. vesicatoria (strain 85-10) (Xanthomonas campestris pv. vesicatoria)).